Here is a 190-residue protein sequence, read N- to C-terminus: MDRKEQKSIIEGLLFVSGDEGIYPEQIAKVLEIEMNEAINILEEMQQECEGANRGLQIVQYAKVYRFATKKEHASYYQKLIDTPTAASLSQAALETLAIVAYRQPITRTEMEEIRGVKTDKALQTLVSHLLIKEMGRAEGPGRPILYGTTKEFLDTFGLKTLDDLPPLSEENEQMNEADLFFGCLQEIWK.

Belongs to the ScpB family. As to quaternary structure, homodimer. Homodimerization may be required to stabilize the binding of ScpA to the Smc head domains. Component of a cohesin-like complex composed of ScpA, ScpB and the Smc homodimer, in which ScpA and ScpB bind to the head domain of Smc. The presence of the three proteins is required for the association of the complex with DNA.

It localises to the cytoplasm. In terms of biological role, participates in chromosomal partition during cell division. May act via the formation of a condensin-like complex containing Smc and ScpA that pull DNA away from mid-cell into both cell halves. This is Segregation and condensation protein B from Bacillus cereus (strain ATCC 14579 / DSM 31 / CCUG 7414 / JCM 2152 / NBRC 15305 / NCIMB 9373 / NCTC 2599 / NRRL B-3711).